A 233-amino-acid polypeptide reads, in one-letter code: 2-C-methyl-D-erythritol 4-phosphate cytidylyltransferase (233 aa).

The protein belongs to the IspD/TarI cytidylyltransferase family. IspD subfamily.

It catalyses the reaction 2-C-methyl-D-erythritol 4-phosphate + CTP + H(+) = 4-CDP-2-C-methyl-D-erythritol + diphosphate. Its pathway is isoprenoid biosynthesis; isopentenyl diphosphate biosynthesis via DXP pathway; isopentenyl diphosphate from 1-deoxy-D-xylulose 5-phosphate: step 2/6. Catalyzes the formation of 4-diphosphocytidyl-2-C-methyl-D-erythritol from CTP and 2-C-methyl-D-erythritol 4-phosphate (MEP). This chain is 2-C-methyl-D-erythritol 4-phosphate cytidylyltransferase, found in Aromatoleum aromaticum (strain DSM 19018 / LMG 30748 / EbN1) (Azoarcus sp. (strain EbN1)).